The sequence spans 486 residues: Cardiolipin synthase A (486 aa).

2 consecutive transmembrane segments (helical) span residues 3 to 23 (TFYT…IAGV) and 38 to 58 (MAWL…YLSF). PLD phosphodiesterase domains lie at 219 to 246 (MDLR…VDPR) and 399 to 426 (EGGL…DMRS). Catalysis depends on residues His224, Lys226, Asp231, His404, Lys406, and Asp411.

It belongs to the phospholipase D family. Cardiolipin synthase subfamily. ClsA sub-subfamily.

Its subcellular location is the cell inner membrane. It carries out the reaction 2 a 1,2-diacyl-sn-glycero-3-phospho-(1'-sn-glycerol) = a cardiolipin + glycerol. In terms of biological role, catalyzes the reversible phosphatidyl group transfer from one phosphatidylglycerol molecule to another to form cardiolipin (CL) (diphosphatidylglycerol) and glycerol. The chain is Cardiolipin synthase A from Klebsiella pneumoniae subsp. pneumoniae (strain ATCC 700721 / MGH 78578).